The primary structure comprises 209 residues: Glutathione S-transferase 1-1 (209 aa).

The GST N-terminal domain maps to 1 to 81 (MADFYYLPGS…YLVEKYGKTD (81 aa)). Residues 51 to 53 (HTI) and 65 to 67 (ESR) contribute to the glutathione site. The region spanning 87 to 209 (CPKKRAVINQ…GCLEFKKYFE (123 aa)) is the GST C-terminal domain.

Belongs to the GST superfamily. Theta family. In terms of assembly, homodimer.

It catalyses the reaction RX + glutathione = an S-substituted glutathione + a halide anion + H(+). Its function is as follows. Conjugation of reduced glutathione to a wide number of exogenous and endogenous hydrophobic electrophiles. The sequence is that of Glutathione S-transferase 1-1 (GstD1) from Drosophila yakuba (Fruit fly).